Here is a 693-residue protein sequence, read N- to C-terminus: FAST kinase domain-containing protein 2, mitochondrial (693 aa).

Phosphoserine is present on residues Ser110 and Ser124. The region spanning 618-675 (VAVLCVSRSAYCLGSSHPRGFLAMKMRHLNAMGFRVILVNNWEMDKLEMEDAVTFLKT) is the RAP domain. The residue at position 692 (Ser692) is a Phosphoserine.

The protein belongs to the FAST kinase family. In terms of assembly, monomer. Found in a complex with GRSF1, DDX28, DHX30 and FASTKD5. Associates with the 16S mitochondrial rRNA (16S mt-rRNA). Forms a regulatory protein-RNA complex, consisting of RCC1L, NGRN, RPUSD3, RPUSD4, TRUB2, FASTKD2 and 16S mt-rRNA.

It is found in the mitochondrion matrix. It localises to the mitochondrion nucleoid. In terms of biological role, plays an important role in assembly of the mitochondrial large ribosomal subunit. As a component of a functional protein-RNA module, consisting of RCC1L, NGRN, RPUSD3, RPUSD4, TRUB2, FASTKD2 and 16S mitochondrial ribosomal RNA (16S mt-rRNA), controls 16S mt-rRNA abundance and is required for intra-mitochondrial translation. May play a role in mitochondrial apoptosis. The chain is FAST kinase domain-containing protein 2, mitochondrial (FASTKD2) from Pongo abelii (Sumatran orangutan).